Reading from the N-terminus, the 179-residue chain is Large ribosomal subunit protein bL25 (179 aa).

Belongs to the bacterial ribosomal protein bL25 family. CTC subfamily. In terms of assembly, part of the 50S ribosomal subunit; part of the 5S rRNA/L5/L18/L25 subcomplex. Contacts the 5S rRNA. Binds to the 5S rRNA independently of L5 and L18.

This is one of the proteins that binds to the 5S RNA in the ribosome where it forms part of the central protuberance. This Desulfitobacterium hafniense (strain DSM 10664 / DCB-2) protein is Large ribosomal subunit protein bL25.